The chain runs to 592 residues: uncharacterized protein (592 aa).

Helical transmembrane passes span 12–32 (IWIL…IFLL), 58–78 (PILF…ISLV), 102–122 (MGLF…SYYL), 191–211 (ISYT…GVEI), 214–234 (MMVF…FWLG), and 299–319 (FSGF…LIQV). The region spanning 58–358 (PILFFLLIVA…FRSTYDNFAS (301 aa)) is the ABC transmembrane type-1 domain. The ABC transporter domain maps to 391–592 (VIFKNLSIQN…LQDKGQWQVL (202 aa)). An ATP-binding site is contributed by 424-431 (GKSGAGKT).

It belongs to the ABC transporter superfamily.

It localises to the cell inner membrane. This is an uncharacterized protein from Haemophilus influenzae (strain ATCC 51907 / DSM 11121 / KW20 / Rd).